Consider the following 876-residue polypeptide: MSKSTAEIRQAFLDFFHSKGHQVVASSSLVPHNDPTLLFTNAGMNQFKDVFLGLDKRNYSRATTSQRCVRAGGKHNDLENVGYTARHHTFFEMLGNFSFGDYFKHDAIQFAWELLTSEKWFALPKERLWVTVYESDDEAYEIWEKEVGIPRERIIRIGDNKGAPYASDNFWQMGDTGPCGPCTEIFYDHGDHIWGGPPGSPEEDGDRYIEIWNIVFMQFNRQADGTMEPLPKPSVDTGMGLERIAAVLQHVNSNYDIDLFRTLIQAVAKVTGATDLSNKSLRVIADHIRSCAFLIADGVMPSNENRGYVLRRIIRRAVRHGNMLGAKETFFYKLVGPLIDVMGSAGEDLKRQQAQVEQVLKTEEEQFARTLERGLALLDEELAKLSGDTLDGETAFRLYDTYGFPVDLTADVCRERNIKVDEAGFEAAMEEQRRRAREASGFGADYNAMIRVDSASEFKGYDHLELNGKVTALFVDGKAVDAINAGQDAVVVLDQTPFYAESGGQVGDKGELKGANFSFVVEDTQKYGQAIGHIGKLAAGSLKVGDAVQADVDEARRARIRLNHSATHLMHAALRQVLGTHVSQKGSLVNDKVLRFDFSHNEAMKPEEIRAVEDLVNAQIRRNLPIETNIMDLEAAKAKGAMALFGEKYDERVRVLSMGDFSTELCGGTHASRTGDIGLFRIISESGTAAGVRRIEAVTGEGAIATVHADSDRLSEVAHLLKGDSNNLADKVRSVLERTRQLEKELQQLKEQAAAQESANLSSKAIDVNGVKLLVSELSGVEPKMLRTMVDDLKNQLGSTIIVLATVAEGKVSLIAGVSKDVTDRVKAGELIGMVAQQVGGKGGGRPDMAQAGGTDAAALPAALASVKGWVSAKLQ.

Lys-74 is subject to N6-acetyllysine. 4 residues coordinate Zn(2+): His-564, His-568, Cys-666, and His-670.

It belongs to the class-II aminoacyl-tRNA synthetase family. Homotetramer. Zn(2+) is required as a cofactor.

The protein resides in the cytoplasm. The catalysed reaction is tRNA(Ala) + L-alanine + ATP = L-alanyl-tRNA(Ala) + AMP + diphosphate. In terms of biological role, catalyzes the attachment of alanine to tRNA(Ala) in a two-step reaction: alanine is first activated by ATP to form Ala-AMP and then transferred to the acceptor end of tRNA(Ala). Also edits incorrectly charged Ser-tRNA(Ala) and Gly-tRNA(Ala) via its editing domain. This Shigella dysenteriae serotype 1 (strain Sd197) protein is Alanine--tRNA ligase.